The sequence spans 841 residues: pre-rRNA 2'-O-ribose RNA methyltransferase FTSJ3 (841 aa).

S-adenosyl-L-methionine-binding residues include Gly-56, Trp-58, Asp-76, Asp-92, and Asp-117. Lys-157 serves as the catalytic Proton acceptor. Positions 332 to 366 (ISLSSGEEDEGNEEDSTAGTTEQPSKEEEEEEQLN) are disordered. A phosphoserine mark is found at Ser-333, Ser-335, Ser-336, Ser-347, and Ser-356. Residues 337–347 (GEEDEGNEEDS) show a composition bias toward acidic residues. The stretch at 356-404 (SKEEEEEEQLNQTLAEMKAQEVAELKRKKKKLLREQRKQRERVELKMDL) forms a coiled coil. Lys-357 participates in a covalent cross-link: Glycyl lysine isopeptide (Lys-Gly) (interchain with G-Cter in SUMO2). Arg-389 carries the citrulline modification. The tract at residues 454–482 (VSDVEDDGDDTSLDSDLDPEELAGVRGHQ) is disordered. Positions 456–474 (DVEDDGDDTSLDSDLDPEE) are enriched in acidic residues. Phosphoserine is present on Ser-547. Thr-567 bears the Phosphothreonine mark. Lys-573 is covalently cross-linked (Glycyl lysine isopeptide (Lys-Gly) (interchain with G-Cter in SUMO2)). Position 578 is a phosphoserine (Ser-578). The tract at residues 579–654 (PLYQDEAPKG…IVPIEDPAKH (76 aa)) is disordered. Lys-637 is covalently cross-linked (Glycyl lysine isopeptide (Lys-Gly) (interchain with G-Cter in SUMO2)). Ser-638 carries the post-translational modification Phosphoserine. Residue Lys-653 forms a Glycyl lysine isopeptide (Lys-Gly) (interchain with G-Cter in SUMO2) linkage. Position 670 is a phosphoserine (Ser-670). Residue Lys-672 forms a Glycyl lysine isopeptide (Lys-Gly) (interchain with G-Cter in SUMO2) linkage. Residue Ser-682 is modified to Phosphoserine. Lys-704 is covalently cross-linked (Glycyl lysine isopeptide (Lys-Gly) (interchain with G-Cter in SUMO2)). The stretch at 733–771 (IKKVAEAKARKKRRMLKRLEQTRKKAEAVVNTVDISERE) forms a coiled coil. At Arg-777 the chain carries Citrulline. The segment covering 805–815 (VRRPAGVRGHF) has biased composition (basic residues). The tract at residues 805-841 (VRRPAGVRGHFKVVDSRMKKDQRAQQRKEQKKKHKRK) is disordered. The span at 816 to 832 (KVVDSRMKKDQRAQQRK) shows a compositional bias: basic and acidic residues.

It belongs to the class I-like SAM-binding methyltransferase superfamily. RNA methyltransferase RlmE family. SPB1 subfamily. As to quaternary structure, interacts with NIP7. Citrullinated by PADI4.

It is found in the nucleus. It localises to the nucleolus. It catalyses the reaction a ribonucleotide in rRNA + S-adenosyl-L-methionine = a 2'-O-methylribonucleotide in rRNA + S-adenosyl-L-homocysteine + H(+). In terms of biological role, RNA 2'-O-methyltransferase involved in the processing of the 34S pre-rRNA to 18S rRNA and in 40S ribosomal subunit formation. This chain is pre-rRNA 2'-O-ribose RNA methyltransferase FTSJ3, found in Pongo abelii (Sumatran orangutan).